A 156-amino-acid polypeptide reads, in one-letter code: ATP synthase subunit b (156 aa).

A helical membrane pass occupies residues leucine 5–valine 25.

The protein belongs to the ATPase B chain family. F-type ATPases have 2 components, F(1) - the catalytic core - and F(0) - the membrane proton channel. F(1) has five subunits: alpha(3), beta(3), gamma(1), delta(1), epsilon(1). F(0) has three main subunits: a(1), b(2) and c(10-14). The alpha and beta chains form an alternating ring which encloses part of the gamma chain. F(1) is attached to F(0) by a central stalk formed by the gamma and epsilon chains, while a peripheral stalk is formed by the delta and b chains.

The protein resides in the cell inner membrane. F(1)F(0) ATP synthase produces ATP from ADP in the presence of a proton or sodium gradient. F-type ATPases consist of two structural domains, F(1) containing the extramembraneous catalytic core and F(0) containing the membrane proton channel, linked together by a central stalk and a peripheral stalk. During catalysis, ATP synthesis in the catalytic domain of F(1) is coupled via a rotary mechanism of the central stalk subunits to proton translocation. Functionally, component of the F(0) channel, it forms part of the peripheral stalk, linking F(1) to F(0). The polypeptide is ATP synthase subunit b (Chromohalobacter salexigens (strain ATCC BAA-138 / DSM 3043 / CIP 106854 / NCIMB 13768 / 1H11)).